The following is a 218-amino-acid chain: N-(5'-phosphoribosyl)anthranilate isomerase (218 aa).

Belongs to the TrpF family.

It carries out the reaction N-(5-phospho-beta-D-ribosyl)anthranilate = 1-(2-carboxyphenylamino)-1-deoxy-D-ribulose 5-phosphate. Its pathway is amino-acid biosynthesis; L-tryptophan biosynthesis; L-tryptophan from chorismate: step 3/5. The protein is N-(5'-phosphoribosyl)anthranilate isomerase of Alcanivorax borkumensis (strain ATCC 700651 / DSM 11573 / NCIMB 13689 / SK2).